The chain runs to 378 residues: MANSANTNTVPKLYRSVIEDVINDVRDIFLDDGVDEQVLMELKTLWENKLMQSRAVDGFHSEEQQLLLQVQQQHQPQQQQHHHHHHQHQQAQPQQTVPQQAQTQQVLIPASQQATAPQVIVPDSKLLQHMNASSITSAAATAATLALPAGVTPVQQLLTNSGQLLQVVRAANGAQYILQPQQSVVLQQQVIPQMQPGGVQAPVIQQVLAPLPGGISPQTGVIIQPQQILFTGNKTQVIPTTVAAPAPAQAPMPAAGQQQPQAQPAQQQAPLVLQVDGTGDTSSEEDEDEEEDYDDDEEEDKEKDGAEDGQVEEEPLNSEDDVSDEEGQELFDTENVVVCQYDKIHRSKNKWKFHLKDGIMNLNGRDYIFSKAIGDAEW.

At alanine 2 the chain carries N-acetylalanine. 3 stretches are compositionally biased toward low complexity: residues 69–79, 89–106, and 247–281; these read QVQQQHQPQQQ, QQAQ…TQQV, and PAQA…TGDT. Disordered regions lie at residues 69–108 and 247–331; these read QVQQ…QVLI and PAQA…QELF. Serine 282, serine 283, serine 318, and serine 323 each carry phosphoserine; by TAF1. Acidic residues predominate over residues 282–331; the sequence is SSEEDEDEEEDYDDDEEEDKEKDGAEDGQVEEEPLNSEDDVSDEEGQELF. Residues histidine 345 and arginine 346 each coordinate DNA.

This sequence belongs to the TFIIA subunit 1 family. In terms of assembly, TFIIA is a heterodimer of the large unprocessed subunit 1 and a small subunit gamma. It was originally believed to be a heterotrimer of an alpha (p35), a beta (p19) and a gamma subunit (p12). TFIIA forms a complex with TBP. Part of TBP-based Pol II pre-initiation complex (PIC), in which Pol II core assembles with general transcription factors and other specific initiation factors including GTF2E1, GTF2E2, GTF2F1, GTF2F2, TCEA1, ERCC2, ERCC3, GTF2H2, GTF2H3, GTF2H4, GTF2H5, GTF2A1, GTF2A2, GTF2B and TBP; this large multi-subunit PIC complex mediates DNA unwinding and targets Pol II core to the transcription start site where the first phosphodiester bond forms. In terms of processing, the alpha and beta subunits are postranslationally produced from the precursor form by TASP1. The cleavage promotes proteasomal degradation. Expressed in pachytene spermatocytes and spermatids.

The protein localises to the nucleus. In terms of biological role, TFIIA is a component of the transcription machinery of RNA polymerase II and plays an important role in transcriptional activation. TFIIA in a complex with TBP mediates transcriptional activity. In Mus musculus (Mouse), this protein is Transcription initiation factor IIA subunit 1 (Gtf2a1).